The sequence spans 258 residues: Ubiquinone/menaquinone biosynthesis C-methyltransferase UbiE (258 aa).

The segment at 1–20 (MSESRTSADGGMETSYGFRE) is disordered. S-adenosyl-L-methionine contacts are provided by residues threonine 81, aspartate 102, and 130–131 (NA).

This sequence belongs to the class I-like SAM-binding methyltransferase superfamily. MenG/UbiE family.

It carries out the reaction a 2-demethylmenaquinol + S-adenosyl-L-methionine = a menaquinol + S-adenosyl-L-homocysteine + H(+). It catalyses the reaction a 2-methoxy-6-(all-trans-polyprenyl)benzene-1,4-diol + S-adenosyl-L-methionine = a 5-methoxy-2-methyl-3-(all-trans-polyprenyl)benzene-1,4-diol + S-adenosyl-L-homocysteine + H(+). It participates in quinol/quinone metabolism; menaquinone biosynthesis; menaquinol from 1,4-dihydroxy-2-naphthoate: step 2/2. It functions in the pathway cofactor biosynthesis; ubiquinone biosynthesis. Functionally, methyltransferase required for the conversion of demethylmenaquinol (DMKH2) to menaquinol (MKH2) and the conversion of 2-polyprenyl-6-methoxy-1,4-benzoquinol (DDMQH2) to 2-polyprenyl-3-methyl-6-methoxy-1,4-benzoquinol (DMQH2). This Rhizobium etli (strain CIAT 652) protein is Ubiquinone/menaquinone biosynthesis C-methyltransferase UbiE.